The chain runs to 238 residues: Probable transcriptional regulatory protein Sde_1551 (238 aa).

Belongs to the TACO1 family.

It is found in the cytoplasm. The sequence is that of Probable transcriptional regulatory protein Sde_1551 from Saccharophagus degradans (strain 2-40 / ATCC 43961 / DSM 17024).